The following is a 217-amino-acid chain: Peptide deformylase (217 aa).

Fe cation is bound by residues cysteine 91 and histidine 133. Residue glutamate 134 is part of the active site. A Fe cation-binding site is contributed by histidine 137. Residues 153–217 are disordered; it reads VSEDGEEEEE…RRGSAAAKEE (65 aa). The segment covering 155 to 176 has biased composition (acidic residues); that stretch reads EDGEEEEEAEVAEVMPEPEAEG. Positions 177 to 192 are enriched in low complexity; the sequence is AGEPSAEGAGQAAAEA. A compositionally biased stretch (basic and acidic residues) spans 206-217; it reads GERRGSAAAKEE.

The protein belongs to the polypeptide deformylase family. Requires Fe(2+) as cofactor.

It carries out the reaction N-terminal N-formyl-L-methionyl-[peptide] + H2O = N-terminal L-methionyl-[peptide] + formate. In terms of biological role, removes the formyl group from the N-terminal Met of newly synthesized proteins. Requires at least a dipeptide for an efficient rate of reaction. N-terminal L-methionine is a prerequisite for activity but the enzyme has broad specificity at other positions. This is Peptide deformylase from Symbiobacterium thermophilum (strain DSM 24528 / JCM 14929 / IAM 14863 / T).